Consider the following 401-residue polypeptide: MSKLVLILNCGSSSLKFAILDPATGEEKLSGLAEAFFLPEARIKWKLNGEKGNADLGAGAAHTEALNFIASNILNDELKNSIAAIGHRIVHGGEKYTQSVIVTDEVVKGIEDAAQFAPLHNPAHLIGIREAFKAFPHLKDKNVVVFDTAFHQTMPEEAFLYALPYSLYKEHGVRRYGAHGTSHYFVSREVAKYVGKPADQVNAIICHLGNGGSVSVVRNGQCIDTSMGLTPLEGLVMGTRCGDIDPAIVFYLYKTLGMSMDQIEETLVKKSGLLGLTEVTSDCRYAEDNYDDESKPETRRALNVYSYRLAKYIGAYMAVLGDDHLDAIAFTGGIGENSAHVRELALNHLKLFGIKIDNERNLATRFGKDGVITTDDSAFKAIVLPTNEELVIAQDTAKLCF.

Asn9 contacts Mg(2+). Position 16 (Lys16) interacts with ATP. Substrate is bound at residue Arg88. The Proton donor/acceptor role is filled by Asp147. Residues 207 to 211, 282 to 284, and 333 to 337 contribute to the ATP site; these read HLGNG, DCR, and GIGEN. A Mg(2+)-binding site is contributed by Glu388.

Belongs to the acetokinase family. Homodimer. Mg(2+) is required as a cofactor. The cofactor is Mn(2+).

It is found in the cytoplasm. It carries out the reaction acetate + ATP = acetyl phosphate + ADP. It participates in metabolic intermediate biosynthesis; acetyl-CoA biosynthesis; acetyl-CoA from acetate: step 1/2. Functionally, catalyzes the formation of acetyl phosphate from acetate and ATP. Can also catalyze the reverse reaction. The polypeptide is Acetate kinase (Haemophilus influenzae (strain ATCC 51907 / DSM 11121 / KW20 / Rd)).